The primary structure comprises 754 residues: 1,4-alpha-glucan branching enzyme GlgB (754 aa).

D431 serves as the catalytic Nucleophile. Residue E484 is the Proton donor of the active site.

Belongs to the glycosyl hydrolase 13 family. GlgB subfamily. Monomer.

It catalyses the reaction Transfers a segment of a (1-&gt;4)-alpha-D-glucan chain to a primary hydroxy group in a similar glucan chain.. The protein operates within glycan biosynthesis; glycogen biosynthesis. Its function is as follows. Catalyzes the formation of the alpha-1,6-glucosidic linkages in glycogen by scission of a 1,4-alpha-linked oligosaccharide from growing alpha-1,4-glucan chains and the subsequent attachment of the oligosaccharide to the alpha-1,6 position. The chain is 1,4-alpha-glucan branching enzyme GlgB from Prochlorococcus marinus (strain AS9601).